Consider the following 408-residue polypeptide: RUN domain-containing protein 3B (408 aa).

The tract at residues M1–L25 is disordered. Residues G8 to K22 show a composition bias toward gly residues. At R13 the chain carries Omega-N-methylarginine. One can recognise an RUN domain in the interval D58–E190. The segment at D213 to V238 is disordered. S216 and S217 each carry phosphoserine. The segment covering F225–E236 has biased composition (polar residues). The stretch at A301–L326 forms a coiled coil. The interval Q337–G359 is disordered.

This sequence belongs to the RUNDC3 family. In terms of assembly, interacts with RAP2A.

The chain is RUN domain-containing protein 3B (Rundc3b) from Mus musculus (Mouse).